The chain runs to 206 residues: N-(5'-phosphoribosyl)anthranilate isomerase (206 aa).

The protein belongs to the TrpF family.

The catalysed reaction is N-(5-phospho-beta-D-ribosyl)anthranilate = 1-(2-carboxyphenylamino)-1-deoxy-D-ribulose 5-phosphate. It participates in amino-acid biosynthesis; L-tryptophan biosynthesis; L-tryptophan from chorismate: step 3/5. In Chlamydia felis (strain Fe/C-56) (Chlamydophila felis), this protein is N-(5'-phosphoribosyl)anthranilate isomerase.